A 118-amino-acid chain; its full sequence is Na(+)/H(+) antiporter subunit G1 (118 aa).

Helical transmembrane passes span 4–24 (IILI…SALA), 38–58 (AHAA…GTFL), and 60–80 (FIAT…FVLI).

This sequence belongs to the CPA3 antiporters (TC 2.A.63) subunit G family. May form a heterooligomeric complex that consists of seven subunits: mnhA1, mnhB1, mnhC1, mnhD1, mnhE1, mnhF1 and mnhG1.

The protein localises to the cell membrane. Its function is as follows. Mnh complex is a Na(+)/H(+) antiporter involved in Na(+) excretion. The sequence is that of Na(+)/H(+) antiporter subunit G1 (mnhG1) from Staphylococcus aureus (strain Mu3 / ATCC 700698).